A 282-amino-acid polypeptide reads, in one-letter code: Large ribosomal subunit protein uL2 (282 aa).

A disordered region spans residues 223–282; that stretch reads TVRGSVMNPNDHPHGGGEGRAPIGRKSPVTPWGKKALGVKTRNTKKTSEKLIVRKRSNKK.

This sequence belongs to the universal ribosomal protein uL2 family. Part of the 50S ribosomal subunit. Forms a bridge to the 30S subunit in the 70S ribosome.

Functionally, one of the primary rRNA binding proteins. Required for association of the 30S and 50S subunits to form the 70S ribosome, for tRNA binding and peptide bond formation. It has been suggested to have peptidyltransferase activity; this is somewhat controversial. Makes several contacts with the 16S rRNA in the 70S ribosome. In Mycoplasma mycoides subsp. mycoides SC (strain CCUG 32753 / NCTC 10114 / PG1), this protein is Large ribosomal subunit protein uL2.